A 923-amino-acid chain; its full sequence is Alanine--tRNA ligase (923 aa).

Residues His614, His618, Cys717, and His721 each coordinate Zn(2+). The interval 884-903 (KVGGGGGGPPDFAQGGGPDA) is disordered. The span at 885-901 (VGGGGGGPPDFAQGGGP) shows a compositional bias: gly residues.

This sequence belongs to the class-II aminoacyl-tRNA synthetase family. Requires Zn(2+) as cofactor.

The protein resides in the cytoplasm. It catalyses the reaction tRNA(Ala) + L-alanine + ATP = L-alanyl-tRNA(Ala) + AMP + diphosphate. Functionally, catalyzes the attachment of alanine to tRNA(Ala) in a two-step reaction: alanine is first activated by ATP to form Ala-AMP and then transferred to the acceptor end of tRNA(Ala). Also edits incorrectly charged Ser-tRNA(Ala) and Gly-tRNA(Ala) via its editing domain. The polypeptide is Alanine--tRNA ligase (Haloquadratum walsbyi (strain DSM 16790 / HBSQ001)).